A 491-amino-acid polypeptide reads, in one-letter code: NADH-ubiquinone oxidoreductase chain 2 (491 aa).

14 helical membrane passes run 11-31 (MIKY…SISI), 38-58 (VHII…VIGI), 74-94 (ELIK…IKMF), 106-126 (ITDE…ISME), 129-149 (NLIT…ILAL), 161-181 (LKYY…IVSI), 210-230 (IALI…HGWL), 238-258 (GMLM…MVLI), 270-290 (AIMF…VGTI), 298-318 (LIRF…LMLA), 330-350 (VYYL…IMGF), 375-395 (GAIV…MTNF), 411-433 (VYLT…NLVK), and 463-483 (IVLG…ILNV).

Belongs to the complex I subunit 2 family.

Its subcellular location is the mitochondrion inner membrane. It catalyses the reaction a ubiquinone + NADH + 5 H(+)(in) = a ubiquinol + NAD(+) + 4 H(+)(out). Its function is as follows. Core subunit of the mitochondrial membrane respiratory chain NADH dehydrogenase (Complex I) that is believed to belong to the minimal assembly required for catalysis. Complex I functions in the transfer of electrons from NADH to the respiratory chain. The immediate electron acceptor for the enzyme is believed to be ubiquinone. The polypeptide is NADH-ubiquinone oxidoreductase chain 2 (nad2) (Dictyostelium citrinum (Slime mold)).